The primary structure comprises 350 residues: tRNA uridine(34) hydroxylase (350 aa).

In terms of domain architecture, Rhodanese spans 146–240; the sequence is DDPDAVFIDM…YARRAREQGL (95 aa). The active-site Cysteine persulfide intermediate is the C200. Residues 319–328 show a composition bias toward basic and acidic residues; it reads RRRRAGRENG. A disordered region spans residues 319–350; that stretch reads RRRRAGRENGNKIFNKSRGRLNSKLSIPDPAE.

It belongs to the TrhO family.

The catalysed reaction is uridine(34) in tRNA + AH2 + O2 = 5-hydroxyuridine(34) in tRNA + A + H2O. Catalyzes oxygen-dependent 5-hydroxyuridine (ho5U) modification at position 34 in tRNAs. This is tRNA uridine(34) hydroxylase from Salmonella typhi.